Here is a 37-residue protein sequence, read N- to C-terminus: Large ribosomal subunit protein bL36c (37 aa).

Belongs to the bacterial ribosomal protein bL36 family.

It is found in the plastid. Its subcellular location is the chloroplast. The chain is Large ribosomal subunit protein bL36c from Lotus japonicus (Lotus corniculatus var. japonicus).